Consider the following 85-residue polypeptide: Putative membrane protein insertion efficiency factor (85 aa).

Belongs to the UPF0161 family.

It localises to the cell inner membrane. Its function is as follows. Could be involved in insertion of integral membrane proteins into the membrane. The chain is Putative membrane protein insertion efficiency factor from Serratia proteamaculans (strain 568).